We begin with the raw amino-acid sequence, 331 residues long: Pantothenate kinase (331 aa).

Gly109–Ser116 serves as a coordination point for ATP.

This sequence belongs to the prokaryotic pantothenate kinase family.

It is found in the cytoplasm. It catalyses the reaction (R)-pantothenate + ATP = (R)-4'-phosphopantothenate + ADP + H(+). The protein operates within cofactor biosynthesis; coenzyme A biosynthesis; CoA from (R)-pantothenate: step 1/5. This is Pantothenate kinase from Rhizobium leguminosarum bv. trifolii (strain WSM2304).